Here is a 1073-residue protein sequence, read N- to C-terminus: Carbamoyl phosphate synthase large chain (1073 aa).

Residues 2 to 403 (PKRTDIKSIL…SLQKALRGLE (402 aa)) form a carboxyphosphate synthetic domain region. 12 residues coordinate ATP: arginine 129, arginine 169, glycine 175, glycine 176, glutamate 208, leucine 210, glutamate 215, glycine 241, isoleucine 242, histidine 243, glutamine 285, and glutamate 299. Positions 133-328 (DVAMKKIGLE…IAKVAAKLAV (196 aa)) constitute an ATP-grasp 1 domain. Positions 285, 299, and 301 each coordinate Mg(2+). Residues glutamine 285, glutamate 299, and asparagine 301 each contribute to the Mn(2+) site. Positions 404 to 553 (VGATGFDPKV…YSTYEEECEA (150 aa)) are oligomerization domain. The tract at residues 554–936 (NPSTDREKIM…AFAKAQLGSN (383 aa)) is carbamoyl phosphate synthetic domain. Residues 679–870 (QHAVERLKLK…LAKVAARVMA (192 aa)) enclose the ATP-grasp 2 domain. The ATP site is built by arginine 715, histidine 754, leucine 756, glutamate 761, glycine 786, valine 787, histidine 788, serine 789, glutamine 829, and glutamate 841. Positions 829, 841, and 843 each coordinate Mg(2+). Mn(2+) contacts are provided by glutamine 829, glutamate 841, and asparagine 843. Residues 937–1073 (STMKKHGRAL…SVQEMHAQIK (137 aa)) enclose the MGS-like domain. The segment at 937–1073 (STMKKHGRAL…SVQEMHAQIK (137 aa)) is allosteric domain.

Belongs to the CarB family. In terms of assembly, composed of two chains; the small (or glutamine) chain promotes the hydrolysis of glutamine to ammonia, which is used by the large (or ammonia) chain to synthesize carbamoyl phosphate. Tetramer of heterodimers (alpha,beta)4. Requires Mg(2+) as cofactor. It depends on Mn(2+) as a cofactor.

The enzyme catalyses hydrogencarbonate + L-glutamine + 2 ATP + H2O = carbamoyl phosphate + L-glutamate + 2 ADP + phosphate + 2 H(+). It carries out the reaction hydrogencarbonate + NH4(+) + 2 ATP = carbamoyl phosphate + 2 ADP + phosphate + 2 H(+). It functions in the pathway amino-acid biosynthesis; L-arginine biosynthesis; carbamoyl phosphate from bicarbonate: step 1/1. The protein operates within pyrimidine metabolism; UMP biosynthesis via de novo pathway; (S)-dihydroorotate from bicarbonate: step 1/3. Its function is as follows. Large subunit of the glutamine-dependent carbamoyl phosphate synthetase (CPSase). CPSase catalyzes the formation of carbamoyl phosphate from the ammonia moiety of glutamine, carbonate, and phosphate donated by ATP, constituting the first step of 2 biosynthetic pathways, one leading to arginine and/or urea and the other to pyrimidine nucleotides. The large subunit (synthetase) binds the substrates ammonia (free or transferred from glutamine from the small subunit), hydrogencarbonate and ATP and carries out an ATP-coupled ligase reaction, activating hydrogencarbonate by forming carboxy phosphate which reacts with ammonia to form carbamoyl phosphate. The polypeptide is Carbamoyl phosphate synthase large chain (Escherichia coli O6:H1 (strain CFT073 / ATCC 700928 / UPEC)).